The following is a 319-amino-acid chain: Ribonuclease Z (319 aa).

Zn(2+) contacts are provided by His62, His64, Asp66, His67, His139, Asp209, and His268. Catalysis depends on Asp66, which acts as the Proton acceptor.

This sequence belongs to the RNase Z family. In terms of assembly, homodimer. Zn(2+) serves as cofactor.

The catalysed reaction is Endonucleolytic cleavage of RNA, removing extra 3' nucleotides from tRNA precursor, generating 3' termini of tRNAs. A 3'-hydroxy group is left at the tRNA terminus and a 5'-phosphoryl group is left at the trailer molecule.. Zinc phosphodiesterase, which displays some tRNA 3'-processing endonuclease activity. Probably involved in tRNA maturation, by removing a 3'-trailer from precursor tRNA. This is Ribonuclease Z from Pseudomonas putida (strain ATCC 700007 / DSM 6899 / JCM 31910 / BCRC 17059 / LMG 24140 / F1).